The primary structure comprises 342 residues: 6-hydroxytryprostatin B O-methyltransferase (342 aa).

Asp201 contacts S-adenosyl-L-methionine. Residue His244 is the Proton acceptor of the active site.

This sequence belongs to the class I-like SAM-binding methyltransferase superfamily. Cation-independent O-methyltransferase family. In terms of assembly, homodimer.

The enzyme catalyses 6-hydroxytryprostatin B + S-adenosyl-L-methionine = tryprostatin A + S-adenosyl-L-homocysteine + H(+). It participates in mycotoxin biosynthesis. Functionally, 6-hydroxytryprostatin B O-methyltransferase; part of the gene cluster that mediates the biosynthesis of fumitremorgins, indole alkaloids that carry not only intriguing chemical structures, but also interesting biological and pharmacological activities. The biosynthesis of fumitremorgin-type alkaloids begins by condensation of the two amino acids L-tryptophan and L-proline to brevianamide F, catalyzed by the non-ribosomal peptide synthetase ftmA. Brevianamide F is then prenylated by the prenyltransferase ftmPT1/ftmB in the presence of dimethylallyl diphosphate, resulting in the formation of tryprostatin B. The three cytochrome P450 monooxygenases, ftmP450-1/ftmC, ftmP450-2/ftmE and ftmP450-3/FtmG, are responsible for the conversion of tryprostatin B to 6-hydroxytryprostatin B, tryprostatin A to fumitremorgin C and fumitremorgin C to 12,13-dihydroxyfumitremorgin C, respectively. The putative methyltransferase ftmMT/ftmD is expected for the conversion of 6-hydroxytryprostatin B to tryprostatin A. FtmPT2/FtmH catalyzes the prenylation of 12,13-dihydroxyfumitre-morgin C in the presence of dimethylallyl diphosphate, resulting in the formation of fumitremorgin B. Fumitremorgin B is further converted to verruculogen by ftmOx1/ftmF via the insertion of an endoperoxide bond between the two prenyl moieties. In some fungal species, verruculogen is further converted to fumitremorgin A, but the enzymes involved in this step have not been identified yet. This is 6-hydroxytryprostatin B O-methyltransferase from Aspergillus fumigatus (strain ATCC MYA-4609 / CBS 101355 / FGSC A1100 / Af293) (Neosartorya fumigata).